The following is a 71-amino-acid chain: MPNRKIEIVTTNCRRCGKSISTLSRSLIGADALREELGGICGDCITPEERQRIEQGTLLAALRQCAAAGTS.

The H-T-H motif DNA-binding region spans 9–28; that stretch reads VTTNCRRCGKSISTLSRSLI.

The polypeptide is Protein KleB (kleB) (Escherichia coli).